Here is a 528-residue protein sequence, read N- to C-terminus: Berberine bridge enzyme-like 17 (528 aa).

An N-terminal signal peptide occupies residues 1 to 19 (MKEVVYVLLLVLLVSVSDA). Asn20, Asn35, Asn52, and Asn72 each carry an N-linked (GlcNAc...) asparagine glycan. A disulfide bond links Cys32 and Cys94. One can recognise an FAD-binding PCMH-type domain in the interval 69–246 (LNPNDTKLIA…LSWKINLVDV (178 aa)). The segment at residues 109–171 (HDYEGLSFTS…KTLAFAGGVC (63 aa)) is a cross-link (6-(S-cysteinyl)-8alpha-(pros-histidyl)-FAD (His-Cys)). 3 N-linked (GlcNAc...) asparagine glycosylation sites follow: Asn256, Asn340, and Asn439.

The protein belongs to the oxygen-dependent FAD-linked oxidoreductase family. It depends on FAD as a cofactor. The FAD cofactor is bound via a bicovalent 6-S-cysteinyl, 8alpha-N1-histidyl FAD linkage.

The protein resides in the secreted. It localises to the cell wall. The sequence is that of Berberine bridge enzyme-like 17 from Arabidopsis thaliana (Mouse-ear cress).